A 500-amino-acid polypeptide reads, in one-letter code: NAD(P)H-quinone oxidoreductase chain 4, chloroplastic (500 aa).

Transmembrane regions (helical) follow at residues Phe-4–Leu-24, Tyr-35–Phe-55, Ile-87–Val-107, Leu-113–Ser-130, Leu-134–Met-154, Phe-167–Leu-187, Ile-211–His-231, His-242–Val-262, Ala-272–Ala-292, Ile-305–Asp-325, Gly-330–Gly-350, Leu-386–Thr-406, Ile-416–Met-436, and Leu-462–Val-482.

Belongs to the complex I subunit 4 family.

The protein localises to the plastid. The protein resides in the chloroplast thylakoid membrane. The catalysed reaction is a plastoquinone + NADH + (n+1) H(+)(in) = a plastoquinol + NAD(+) + n H(+)(out). The enzyme catalyses a plastoquinone + NADPH + (n+1) H(+)(in) = a plastoquinol + NADP(+) + n H(+)(out). This is NAD(P)H-quinone oxidoreductase chain 4, chloroplastic from Olimarabidopsis pumila (Dwarf rocket).